The sequence spans 461 residues: Phosphomethylpyrimidine synthase (461 aa).

Substrate is bound by residues Asn80, Met109, Tyr139, His174, 194 to 196 (SRG), 235 to 238 (DSLR), and Glu274. His278 contacts Zn(2+). Tyr301 provides a ligand contact to substrate. Position 342 (His342) interacts with Zn(2+). [4Fe-4S] cluster contacts are provided by Cys422, Cys425, and Cys430.

It belongs to the ThiC family. Homodimer. It depends on [4Fe-4S] cluster as a cofactor.

It carries out the reaction 5-amino-1-(5-phospho-beta-D-ribosyl)imidazole + S-adenosyl-L-methionine = 4-amino-2-methyl-5-(phosphooxymethyl)pyrimidine + CO + 5'-deoxyadenosine + formate + L-methionine + 3 H(+). It functions in the pathway cofactor biosynthesis; thiamine diphosphate biosynthesis. In terms of biological role, catalyzes the synthesis of the hydroxymethylpyrimidine phosphate (HMP-P) moiety of thiamine from aminoimidazole ribotide (AIR) in a radical S-adenosyl-L-methionine (SAM)-dependent reaction. The chain is Phosphomethylpyrimidine synthase from Nautilia profundicola (strain ATCC BAA-1463 / DSM 18972 / AmH).